A 351-amino-acid chain; its full sequence is tRNA pseudouridine synthase D (351 aa).

Asp81 serves as the catalytic Nucleophile. Residues 158 to 304 form the TRUD domain; the sequence is GVPNYFGSQR…MRHERRAIEL (147 aa).

The protein belongs to the pseudouridine synthase TruD family.

The catalysed reaction is uridine(13) in tRNA = pseudouridine(13) in tRNA. In terms of biological role, responsible for synthesis of pseudouridine from uracil-13 in transfer RNAs. This is tRNA pseudouridine synthase D from Aliivibrio fischeri (strain ATCC 700601 / ES114) (Vibrio fischeri).